We begin with the raw amino-acid sequence, 887 residues long: Alanine--tRNA ligase (887 aa).

Zn(2+) is bound by residues His-565, His-569, Cys-674, and His-678.

Belongs to the class-II aminoacyl-tRNA synthetase family. The cofactor is Zn(2+).

The protein localises to the cytoplasm. The catalysed reaction is tRNA(Ala) + L-alanine + ATP = L-alanyl-tRNA(Ala) + AMP + diphosphate. Catalyzes the attachment of alanine to tRNA(Ala) in a two-step reaction: alanine is first activated by ATP to form Ala-AMP and then transferred to the acceptor end of tRNA(Ala). Also edits incorrectly charged Ser-tRNA(Ala) and Gly-tRNA(Ala) via its editing domain. The polypeptide is Alanine--tRNA ligase (Erythrobacter litoralis (strain HTCC2594)).